A 70-amino-acid polypeptide reads, in one-letter code: Spore germination protein-like protein YpzD (70 aa).

This sequence belongs to the GerPA/GerPF family.

The chain is Spore germination protein-like protein YpzD (ypzD) from Bacillus subtilis (strain 168).